Reading from the N-terminus, the 780-residue chain is Aconitate hydratase, mitochondrial (780 aa).

Residues 1–27 (MAPYSLLVTRLQKALGVRQYHVASVLC) constitute a mitochondrion transit peptide. Residue Lys31 is modified to N6-succinyllysine. Lys50 is modified (N6-acetyllysine; alternate). At Lys50 the chain carries N6-succinyllysine; alternate. Substrate is bound at residue Gln99. N6-acetyllysine; alternate occurs at positions 138 and 144. N6-succinyllysine; alternate occurs at positions 138 and 144. Residue 192 to 194 (DSH) participates in substrate binding. Position 233 is an N6-acetyllysine; alternate (Lys233). The residue at position 233 (Lys233) is an N6-succinyllysine; alternate. Cys385 lines the [4Fe-4S] cluster pocket. Lys411 is subject to N6-succinyllysine. The [4Fe-4S] cluster site is built by Cys448 and Cys451. Residues Arg474 and Arg479 each coordinate substrate. Residues 528-537 (DADELPKGEF) are compositionally biased toward basic and acidic residues. The segment at 528–560 (DADELPKGEFDPGQDTYQHPPKDSSGQHVDVSP) is disordered. Residue Lys549 is modified to N6-succinyllysine. A compositionally biased stretch (polar residues) spans 551-560 (SSGQHVDVSP). Ser559 carries the post-translational modification Phosphoserine. Position 573 is an N6-acetyllysine; alternate (Lys573). Lys573 is subject to N6-succinyllysine; alternate. Residues Lys577 and Lys591 each carry the N6-succinyllysine modification. Lys605 carries the post-translational modification N6-acetyllysine; alternate. N6-succinyllysine; alternate is present on Lys605. Arg607 serves as a coordination point for substrate. The residue at position 628 (Lys628) is an N6-succinyllysine. The residue at position 670 (Ser670) is a Phosphoserine. 670-671 (SR) provides a ligand contact to substrate. Residue Lys689 is modified to N6-succinyllysine. 2 positions are modified to N6-acetyllysine; alternate: Lys723 and Lys730. An N6-succinyllysine; alternate mark is found at Lys723 and Lys730. An N6-acetyllysine mark is found at Lys736, Lys739, and Lys743.

It belongs to the aconitase/IPM isomerase family. Monomer. [4Fe-4S] cluster serves as cofactor. In terms of processing, forms covalent cross-links mediated by transglutaminase TGM2, between a glutamine and the epsilon-amino group of a lysine residue, forming homopolymers and heteropolymers.

The protein resides in the mitochondrion. It catalyses the reaction citrate = D-threo-isocitrate. The protein operates within carbohydrate metabolism; tricarboxylic acid cycle; isocitrate from oxaloacetate: step 2/2. Functionally, catalyzes the isomerization of citrate to isocitrate via cis-aconitate. This Homo sapiens (Human) protein is Aconitate hydratase, mitochondrial (ACO2).